A 1356-amino-acid chain; its full sequence is Vegetative incompatibility protein HET-E-1 (1356 aa).

Residues 294–629 form the NACHT domain; that stretch reads RLLWINGDPG…DFLLGTASDK (336 aa). GTP is bound at residue 300–307; the sequence is GDPGKGKT. WD repeat units lie at residues 839–869, 881–911, 923–953, 965–995, 1007–1037, 1049–1079, 1091–1121, 1133–1163, 1175–1205, and 1217–1247; these read GHGS…KIWD, GHGG…KIWD, and GHGD…KIWD.

Functionally, responsible for vegetative incompatibility through specific interactions with different alleles of the unlinked gene, het-c. The chain is Vegetative incompatibility protein HET-E-1 (HET-E1) from Podospora anserina (Pleurage anserina).